The primary structure comprises 185 residues: Ribosome-recycling factor (185 aa).

This sequence belongs to the RRF family.

It is found in the cytoplasm. Functionally, responsible for the release of ribosomes from messenger RNA at the termination of protein biosynthesis. May increase the efficiency of translation by recycling ribosomes from one round of translation to another. The polypeptide is Ribosome-recycling factor (Histophilus somni (strain 2336) (Haemophilus somnus)).